A 379-amino-acid chain; its full sequence is Homoserine O-acetyltransferase (379 aa).

The AB hydrolase-1 domain maps to 52 to 356 (NVVVVLHALT…VYGHDGFLVE (305 aa)). S157 functions as the Nucleophile in the catalytic mechanism. Substrate is bound at residue R227. Active-site residues include D320 and H350. D351 serves as a coordination point for substrate.

The protein belongs to the AB hydrolase superfamily. MetX family. As to quaternary structure, homodimer.

It localises to the cytoplasm. It catalyses the reaction L-homoserine + acetyl-CoA = O-acetyl-L-homoserine + CoA. It participates in amino-acid biosynthesis; L-methionine biosynthesis via de novo pathway; O-acetyl-L-homoserine from L-homoserine: step 1/1. Transfers an acetyl group from acetyl-CoA to L-homoserine, forming acetyl-L-homoserine. The polypeptide is Homoserine O-acetyltransferase (Mycobacterium bovis (strain ATCC BAA-935 / AF2122/97)).